Consider the following 455-residue polypeptide: Hydroxymethylglutaryl-CoA synthase 2 (455 aa).

E86 acts as the Proton donor/acceptor in catalysis. C120 (acyl-thioester intermediate) is an active-site residue. C120, T161, S211, H255, K264, N329, and S363 together coordinate (3S)-3-hydroxy-3-methylglutaryl-CoA. Residue H255 is the Proton donor/acceptor of the active site.

The protein belongs to the thiolase-like superfamily. HMG-CoA synthase family.

The catalysed reaction is acetoacetyl-CoA + acetyl-CoA + H2O = (3S)-3-hydroxy-3-methylglutaryl-CoA + CoA + H(+). The protein operates within metabolic intermediate biosynthesis; (R)-mevalonate biosynthesis; (R)-mevalonate from acetyl-CoA: step 2/3. Functionally, this enzyme condenses acetyl-CoA with acetoacetyl-CoA to form HMG-CoA, which is the substrate for HMG-CoA reductase. In Blattella germanica (German cockroach), this protein is Hydroxymethylglutaryl-CoA synthase 2 (HMGCS-2).